A 333-amino-acid chain; its full sequence is Uroporphyrinogen decarboxylase (333 aa).

Substrate-binding positions include 21 to 25 (RQVGR), Asp70, Tyr139, Ser194, and His309.

It belongs to the uroporphyrinogen decarboxylase family. In terms of assembly, homodimer.

It localises to the cytoplasm. It carries out the reaction uroporphyrinogen III + 4 H(+) = coproporphyrinogen III + 4 CO2. Its pathway is porphyrin-containing compound metabolism; protoporphyrin-IX biosynthesis; coproporphyrinogen-III from 5-aminolevulinate: step 4/4. Functionally, catalyzes the decarboxylation of four acetate groups of uroporphyrinogen-III to yield coproporphyrinogen-III. The polypeptide is Uroporphyrinogen decarboxylase (Chlamydia caviae (strain ATCC VR-813 / DSM 19441 / 03DC25 / GPIC) (Chlamydophila caviae)).